A 358-amino-acid chain; its full sequence is Probable D-xylulose reductase A (358 aa).

Cys47, His72, and Glu73 together coordinate Zn(2+). Residue 182 to 187 (GAGPVG) coordinates NAD(+).

Belongs to the zinc-containing alcohol dehydrogenase family. Requires Zn(2+) as cofactor.

The enzyme catalyses xylitol + NAD(+) = D-xylulose + NADH + H(+). Its pathway is carbohydrate degradation; L-arabinose degradation via L-arabinitol; D-xylulose 5-phosphate from L-arabinose (fungal route): step 4/5. In terms of biological role, xylitol dehydrogenase which catalyzes the conversion of xylitol to D-xylulose. Xylose is a major component of hemicelluloses such as xylan. Most fungi utilize D-xylose via three enzymatic reactions, xylose reductase (XR), xylitol dehydrogenase (XDH), and xylulokinase, to form xylulose 5-phosphate, which enters pentose phosphate pathway. This Aspergillus clavatus (strain ATCC 1007 / CBS 513.65 / DSM 816 / NCTC 3887 / NRRL 1 / QM 1276 / 107) protein is Probable D-xylulose reductase A (xdhA).